A 109-amino-acid polypeptide reads, in one-letter code: Small ribosomal subunit protein bS6 (109 aa).

It belongs to the bacterial ribosomal protein bS6 family.

In terms of biological role, binds together with bS18 to 16S ribosomal RNA. This chain is Small ribosomal subunit protein bS6, found in Ehrlichia chaffeensis (strain ATCC CRL-10679 / Arkansas).